The primary structure comprises 442 residues: Trigger factor (442 aa).

Positions 163–248 (YDRVTINYCI…IIKIEKKQEL (86 aa)) constitute a PPIase FKBP-type domain.

It belongs to the FKBP-type PPIase family. Tig subfamily.

Its subcellular location is the cytoplasm. The catalysed reaction is [protein]-peptidylproline (omega=180) = [protein]-peptidylproline (omega=0). Functionally, involved in protein export. Acts as a chaperone by maintaining the newly synthesized protein in an open conformation. Functions as a peptidyl-prolyl cis-trans isomerase. This Buchnera aphidicola subsp. Acyrthosiphon pisum (strain 5A) protein is Trigger factor.